A 610-amino-acid chain; its full sequence is Manganese lipoxygenase (610 aa).

Residues 1-16 (MVALLIFLGIFTCVET) form the signal peptide. The region spanning 47-610 (FTLPNEDDEI…PGVIPFYLSV (564 aa)) is the Lipoxygenase domain. N-linked (GlcNAc...) asparagine glycosylation is found at Asn157 and Asn259. Positions 290 and 295 each coordinate Mn(2+). Residue Asn386 is glycosylated (N-linked (GlcNAc...) asparagine). The Mn(2+) site is built by His475 and Asn479. N-linked (GlcNAc...) asparagine glycosylation occurs at Asn540. Val610 contacts Mn(2+).

The protein belongs to the lipoxygenase family. Manganese lipoxygenase subfamily. Requires Mn(2+) as cofactor. N- and O-glycosylated.

Its subcellular location is the secreted. It catalyses the reaction (9Z,12Z)-octadecadienoate + O2 = (11S)-hydroperoxy-(9Z,12Z)-octadecadienoate. The catalysed reaction is (9Z,12Z)-octadecadienoate + O2 = (11R)-hydroperoxy-(9Z,12Z)-octadecadienoate. It carries out the reaction (9Z,12Z)-octadecadienoate + O2 = (13S)-hydroperoxy-(9Z,11E)-octadecadienoate. The enzyme catalyses (9Z,12Z,15Z)-octadecatrienoate + O2 = (11S)-hydroperoxy-(9Z,12Z,15Z)-octadecatrienoate. Its function is as follows. Lipoxygenase that metabolizes linoleic and alpha-linolenic acids to 9-, 11- and 13-hydroperoxy fatty acids. Oxidizes linoleic acid to mainly 11R-, 13S- and racemic 9-HPODE, and alpha-linolenic acid to 11-HPOTrE. In Fusarium oxysporum (strain Fo5176) (Fusarium vascular wilt), this protein is Manganese lipoxygenase.